A 297-amino-acid chain; its full sequence is N-acetylneuraminate lyase (297 aa).

Aceneuramate contacts are provided by serine 47 and threonine 48. The active-site Proton donor is tyrosine 137. Lysine 165 serves as the catalytic Schiff-base intermediate with substrate. Residues threonine 167, glycine 189, aspartate 191, glutamate 192, and serine 208 each contribute to the aceneuramate site.

Belongs to the DapA family. NanA subfamily. In terms of assembly, homotetramer.

It localises to the cytoplasm. It catalyses the reaction aceneuramate = aldehydo-N-acetyl-D-mannosamine + pyruvate. The protein operates within amino-sugar metabolism; N-acetylneuraminate degradation; D-fructose 6-phosphate from N-acetylneuraminate: step 1/5. Functionally, catalyzes the reversible aldol cleavage of N-acetylneuraminic acid (sialic acid; Neu5Ac) to form pyruvate and N-acetylmannosamine (ManNAc) via a Schiff base intermediate. The chain is N-acetylneuraminate lyase from Escherichia coli O139:H28 (strain E24377A / ETEC).